The sequence spans 294 residues: uncharacterized protein (294 aa).

It belongs to the glycosyltransferase 2 family. WaaE/KdtX subfamily.

This is an uncharacterized protein from Rickettsia bellii (strain RML369-C).